Reading from the N-terminus, the 156-residue chain is ATP synthase subunit b (156 aa).

Residues leucine 7–leucine 29 traverse the membrane as a helical segment.

The protein belongs to the ATPase B chain family. As to quaternary structure, F-type ATPases have 2 components, F(1) - the catalytic core - and F(0) - the membrane proton channel. F(1) has five subunits: alpha(3), beta(3), gamma(1), delta(1), epsilon(1). F(0) has three main subunits: a(1), b(2) and c(10-14). The alpha and beta chains form an alternating ring which encloses part of the gamma chain. F(1) is attached to F(0) by a central stalk formed by the gamma and epsilon chains, while a peripheral stalk is formed by the delta and b chains.

Its subcellular location is the cell inner membrane. Its function is as follows. F(1)F(0) ATP synthase produces ATP from ADP in the presence of a proton or sodium gradient. F-type ATPases consist of two structural domains, F(1) containing the extramembraneous catalytic core and F(0) containing the membrane proton channel, linked together by a central stalk and a peripheral stalk. During catalysis, ATP synthesis in the catalytic domain of F(1) is coupled via a rotary mechanism of the central stalk subunits to proton translocation. Functionally, component of the F(0) channel, it forms part of the peripheral stalk, linking F(1) to F(0). The sequence is that of ATP synthase subunit b from Saccharophagus degradans (strain 2-40 / ATCC 43961 / DSM 17024).